The sequence spans 245 residues: Terpene cyclase prhH (245 aa).

7 helical membrane-spanning segments follow: residues 17–37 (ILAI…VNYI), 51–71 (IGIL…WMFP), 76–96 (HWQG…LVTL), 113–133 (IVFI…ALAA), 138–158 (ALGF…CGIA), 170–190 (SYLI…KLCI), and 205–225 (PMCW…PFLY).

The protein belongs to the paxB family.

It localises to the membrane. The protein operates within secondary metabolite biosynthesis; terpenoid biosynthesis. In terms of biological role, terpene cyclase; part of the gene cluster that mediates the biosynthesis of paraherquonin, a meroterpenoid with a unique, highly congested hexacyclic molecular architecture. The first step of the pathway is the synthesis of 3,5-dimethylorsellinic acid (DMOA) by the polyketide synthase prhL. Synthesis of DMOA is followed by farnesylation by the prenyltransferase prhE, methylesterification by the methyl-transferase prhM, epoxidation of the prenyl chain by the flavin-dependent monooxygenase prhF, and cyclization of the farnesyl moiety by the terpene cyclase prhH, to yield the tetracyclic intermediate, protoaustinoid A. The short chain dehydrogenase prhI then oxidizes the C-3 alcohol group of the terpene cyclase product to transform protoaustinoid A into protoaustinoid B. The FAD-binding monooxygenase prhJ catalyzes the oxidation of protoaustinoid B into preaustinoid A which is further oxidized into preaustinoid A1 by FAD-binding monooxygenase phrK. Finally, prhA leads to berkeleydione via the berkeleyone B intermediate. PrhA is a multifunctional dioxygenase that first desaturates at C5-C6 to form berkeleyone B, followed by rearrangement of the A/B-ring to form the cycloheptadiene moiety in berkeleydione. Berkeleydione serves as the key intermediate for the biosynthesis of paraherquonin as well as many other meroterpenoids. The cytochrome P450 monooxygenases prhB, prhD, and prhN, as well as the isomerase prhC, are probably involved in the late stage of paraherquonin biosynthesis, after the production of berkeleydione. Especially prhC might be a multifunctional enzyme that catalyzes the D-ring expansion via intramolecular methoxy rearrangement, as well as the hydrolysis of the expanded D-ring. The protein is Terpene cyclase prhH of Penicillium brasilianum.